The following is a 211-amino-acid chain: SAGA-associated factor 11 homolog (211 aa).

An SGF11-type zinc finger spans residues 115–136; that stretch reads CTCPHCDRLVAAARFAPHLEKC. Residues 153–211 are disordered; sequence TKEGASASSSSTSTYIQSGGNTGGTDDEDDVDWSSDKRKKKSTQNSRNNGSKKNNGKIF. Residues 157–166 show a composition bias toward low complexity; that stretch reads ASASSSSTST. S187 is subject to Phosphoserine. The span at 197–211 shows a compositional bias: low complexity; it reads NSRNNGSKKNNGKIF.

Belongs to the SGF11 family. Component of some SAGA transcription coactivator-HAT complexes, at least composed of Ada2b, not/nonstop, Pcaf/Gcn5, Sgf11 and Spt3. Within the SAGA complex, Sgf11, e(y)2, and not/nonstop form an additional subcomplex of SAGA called the DUB module (deubiquitination module). Interacts directly with not/nonstop. Interacts with the AMEX complex component xmas-2. Interacts with Cbp80; important for promoter recruitment of Sgf11 that is not associated with the DUB module.

It is found in the nucleus. The protein localises to the nucleoplasm. It localises to the cytoplasm. Its function is as follows. Component of the transcription regulatory histone acetylation (HAT) complex SAGA, a multiprotein complex that activates transcription by remodeling chromatin and mediating histone acetylation and deubiquitination. Within the SAGA complex, participates in a subcomplex that specifically deubiquitinates histone H2B. The SAGA complex is recruited to specific gene promoters by activators, where it is required for transcription. Required for nuclear receptor-mediated transactivation. Binds independently on SAGA to promoters in an RNA-dependent manner. Binds to mRNA and is essential for total mRNA export from the nucleus. Required to counteract heterochromatin silencing. Controls the development of neuronal connectivity in visual system by being required for accurate axon targeting in the optic lobe. Required for expression of ecdysone-induced genes such as br/broad. This Drosophila mojavensis (Fruit fly) protein is SAGA-associated factor 11 homolog.